A 462-amino-acid polypeptide reads, in one-letter code: Transactivator/viroplasmin protein (462 aa).

The tract at residues 433–462 is disordered; sequence NVSNDEKRSTKSVSSDEINLSAENDGYQHS. Over residues 443–462 the composition is skewed to polar residues; that stretch reads KSVSSDEINLSAENDGYQHS.

This sequence belongs to the caulimoviridae viroplasmin family.

It localises to the host cytoplasm. In terms of biological role, enhances the translation of downstream ORFs on polycistronic mRNAs derived from soybean chlorotic mottle virus. The sequence is that of Transactivator/viroplasmin protein from Soybean chlorotic mottle virus.